We begin with the raw amino-acid sequence, 1407 residues long: DNA-directed RNA polymerase subunit beta' (1407 aa).

Cys70, Cys72, Cys85, and Cys88 together coordinate Zn(2+). Positions 460, 462, and 464 each coordinate Mg(2+). Cys814, Cys888, Cys895, and Cys898 together coordinate Zn(2+). An N6-acetyllysine modification is found at Lys972.

The protein belongs to the RNA polymerase beta' chain family. In terms of assembly, the RNAP catalytic core consists of 2 alpha, 1 beta, 1 beta' and 1 omega subunit. When a sigma factor is associated with the core the holoenzyme is formed, which can initiate transcription. The cofactor is Mg(2+). Zn(2+) is required as a cofactor.

The catalysed reaction is RNA(n) + a ribonucleoside 5'-triphosphate = RNA(n+1) + diphosphate. DNA-dependent RNA polymerase catalyzes the transcription of DNA into RNA using the four ribonucleoside triphosphates as substrates. In Escherichia coli O1:K1 / APEC, this protein is DNA-directed RNA polymerase subunit beta'.